A 702-amino-acid chain; its full sequence is Methionine--tRNA ligase (702 aa).

A 'HIGH' region motif is present at residues 23–33; sequence PYANGPLHLGH. Residues C154, C157, C167, and C170 each contribute to the Zn(2+) site. The 'KMSKS' region signature appears at 341 to 345; it reads KMSKS. Residue K344 coordinates ATP. The segment at 562–593 is disordered; that stretch reads LAPPPASAKQQNASMSNTAPPPTAEEPETTAP. The span at 569–578 shows a compositional bias: polar residues; sequence AKQQNASMSN. Residues 599 to 702 enclose the tRNA-binding domain; the sequence is DFAKLDLRIG…SSAQPGMPVR (104 aa).

The protein belongs to the class-I aminoacyl-tRNA synthetase family. MetG type 1 subfamily. As to quaternary structure, homodimer. The cofactor is Zn(2+).

It is found in the cytoplasm. The catalysed reaction is tRNA(Met) + L-methionine + ATP = L-methionyl-tRNA(Met) + AMP + diphosphate. Functionally, is required not only for elongation of protein synthesis but also for the initiation of all mRNA translation through initiator tRNA(fMet) aminoacylation. This chain is Methionine--tRNA ligase, found in Xylella fastidiosa (strain M23).